Here is a 333-residue protein sequence, read N- to C-terminus: Serine/threonine-protein phosphatase PP1-beta (333 aa).

The Mn(2+) site is built by D63, H65, D91, and N123. H124 (proton donor) is an active-site residue. Residues H172 and H247 each coordinate Mn(2+). A disordered region spans residues 306–333 (GAGGVGSNRPVTPPRNAPAAQPKKGAKK). Positions 322–333 (APAAQPKKGAKK) are enriched in low complexity.

The protein belongs to the PPP phosphatase family. PP-1 subfamily. As to quaternary structure, interacts with lab-1; the interaction is direct. Interacts with knl-1; the interaction is direct. The cofactor is Mn(2+).

It is found in the cytoplasm. The protein localises to the nucleus. The enzyme catalyses O-phospho-L-seryl-[protein] + H2O = L-seryl-[protein] + phosphate. It carries out the reaction O-phospho-L-threonyl-[protein] + H2O = L-threonyl-[protein] + phosphate. Its function is as follows. Serine/threonine-protein phosphatase essential for chromosomal dynamics during meiosis and mitosis. Antagonizes the function of air-2 in the regulation of chromosome cohesion. Dephosphorylates histone H3 at 'Ser-10'. Also involved in the activation of chloride channel clh-3 during cell swelling and meiotic maturation. Essential for embryogenesis. The chain is Serine/threonine-protein phosphatase PP1-beta (gsp-2) from Caenorhabditis briggsae.